A 218-amino-acid polypeptide reads, in one-letter code: Large ribosomal subunit protein uL3 (218 aa).

The interval 126–163 (HGFSRGPMTHGSKNHRQPGSIGAGTTPGRIYPGKRMSG) is disordered.

This sequence belongs to the universal ribosomal protein uL3 family. Part of the 50S ribosomal subunit. Forms a cluster with proteins L14 and L19.

Functionally, one of the primary rRNA binding proteins, it binds directly near the 3'-end of the 23S rRNA, where it nucleates assembly of the 50S subunit. This chain is Large ribosomal subunit protein uL3, found in Synechococcus sp. (strain CC9311).